The sequence spans 575 residues: FAD-dependent monooxygenase rstn6 (575 aa).

The signal sequence occupies residues 1 to 17 (MYDVIVIGAGWCGLVAA). Ile106 serves as a coordination point for FAD. Asn239 and Asn295 each carry an N-linked (GlcNAc...) asparagine glycan.

It belongs to the FAD-binding monooxygenase family. FAD serves as cofactor.

It participates in antifungal biosynthesis. Its function is as follows. FAD-dependent monooxygenase; part of the gene cluster that mediates the biosynthesis of the tetrahydropyranyl antifungal agent restricticin that acts as an inhibitor of CYP51 and blocks the ergosterol biosynthesis. The highly reducing polyketide synthase rstn3, the short chain dehydrogenase rstn4, the cyclase rstn5, the FAD-dependent monooxygenase rstn6 and the enoylreductase rstn7 are required to generate the first stable intermediate desmethylrestrictinol. Rstn3 with rstn7 biosynthesize the first polyketide chain intermediate that is reduced by rstn4, followed by epoxidation by rstn6 before 6-endo cyclization via epoxide opening by rstn5 leads to desmethylrestrictinol. The methyltransferase rstn1 then catalyzes the C4 O-methylation of desmethylrestrictinol to produce restrictinol, and the nonribosomal peptide synthetase rstn8 catalyzes the C3 esterification of restrictinol with glycine that leads to restricticin. In Aspergillus nomiae NRRL (strain ATCC 15546 / NRRL 13137 / CBS 260.88 / M93), this protein is FAD-dependent monooxygenase rstn6.